Consider the following 125-residue polypeptide: Large ribosomal subunit protein uL22c (125 aa).

It belongs to the universal ribosomal protein uL22 family. Part of the 50S ribosomal subunit.

It is found in the plastid. The protein resides in the chloroplast. Functionally, this protein binds specifically to 23S rRNA. In terms of biological role, the globular domain of the protein is located near the polypeptide exit tunnel on the outside of the subunit, while an extended beta-hairpin is found that lines the wall of the exit tunnel in the center of the 70S ribosome. The chain is Large ribosomal subunit protein uL22c (rpl22) from Huperzia lucidula (Shining clubmoss).